The chain runs to 136 residues: Histone H3 (136 aa).

A disordered region spans residues 1–43 (MARTKQTARKNVGGKAPRKHIGQKSARKTASTTAGMKKPHRYR). K10 bears the N6-methylated lysine mark. K15 and K24 each carry N6-acetyllysine. Residues 16–27 (APRKHIGQKSAR) show a composition bias toward basic residues. 2 positions are modified to N6-methylated lysine: K28 and K37.

It belongs to the histone H3 family. The nucleosome is a histone octamer containing two molecules each of H2A, H2B, H3 and H4 assembled in one H3-H4 heterotetramer and two H2A-H2B heterodimers. The octamer wraps approximately 147 bp of DNA.

Its subcellular location is the nucleus. It localises to the chromosome. Its function is as follows. Core component of nucleosome. Nucleosomes wrap and compact DNA into chromatin, limiting DNA accessibility to the cellular machineries which require DNA as a template. Histones thereby play a central role in transcription regulation, DNA repair, DNA replication and chromosomal stability. DNA accessibility is regulated via a complex set of post-translational modifications of histones, also called histone code, and nucleosome remodeling. This chain is Histone H3, found in Euplotes crassus.